A 136-amino-acid polypeptide reads, in one-letter code: 5-hydroxyisourate hydrolase (136 aa).

An N-terminal signal peptide occupies residues 1 to 20; it reads MKRYILATVIASLVAAPAMA. Substrate-binding residues include histidine 31, arginine 69, and tyrosine 133.

The protein belongs to the transthyretin family. 5-hydroxyisourate hydrolase subfamily. In terms of assembly, homotetramer.

Its subcellular location is the periplasm. It carries out the reaction 5-hydroxyisourate + H2O = 5-hydroxy-2-oxo-4-ureido-2,5-dihydro-1H-imidazole-5-carboxylate + H(+). Its function is as follows. Catalyzes the hydrolysis of 5-hydroxyisourate (HIU) to 2-oxo-4-hydroxy-4-carboxy-5-ureidoimidazoline (OHCU). The polypeptide is 5-hydroxyisourate hydrolase (hiuH) (Salmonella typhimurium (strain LT2 / SGSC1412 / ATCC 700720)).